Here is a 545-residue protein sequence, read N- to C-terminus: Glucose-6-phosphate isomerase (545 aa).

The Proton donor role is filled by glutamate 353. Active-site residues include histidine 384 and lysine 510.

Belongs to the GPI family.

The protein localises to the cytoplasm. The catalysed reaction is alpha-D-glucose 6-phosphate = beta-D-fructose 6-phosphate. It participates in carbohydrate biosynthesis; gluconeogenesis. It functions in the pathway carbohydrate degradation; glycolysis; D-glyceraldehyde 3-phosphate and glycerone phosphate from D-glucose: step 2/4. In terms of biological role, catalyzes the reversible isomerization of glucose-6-phosphate to fructose-6-phosphate. The chain is Glucose-6-phosphate isomerase from Aromatoleum aromaticum (strain DSM 19018 / LMG 30748 / EbN1) (Azoarcus sp. (strain EbN1)).